Here is a 347-residue protein sequence, read N- to C-terminus: Anthranilate phosphoribosyltransferase (347 aa).

Residues Gly-88, 91–92 (GD), Thr-96, 98–101 (NIST), 116–124 (KHGNRSVSS), and Ser-128 contribute to the 5-phospho-alpha-D-ribose 1-diphosphate site. Gly-88 lines the anthranilate pocket. Residue Ser-100 coordinates Mg(2+). Residue Asn-119 participates in anthranilate binding. Arg-174 contacts anthranilate. Residues Asp-232 and Glu-233 each contribute to the Mg(2+) site.

Belongs to the anthranilate phosphoribosyltransferase family. In terms of assembly, homodimer. The cofactor is Mg(2+).

The catalysed reaction is N-(5-phospho-beta-D-ribosyl)anthranilate + diphosphate = 5-phospho-alpha-D-ribose 1-diphosphate + anthranilate. The protein operates within amino-acid biosynthesis; L-tryptophan biosynthesis; L-tryptophan from chorismate: step 2/5. Its function is as follows. Catalyzes the transfer of the phosphoribosyl group of 5-phosphorylribose-1-pyrophosphate (PRPP) to anthranilate to yield N-(5'-phosphoribosyl)-anthranilate (PRA). The sequence is that of Anthranilate phosphoribosyltransferase from Shewanella sp. (strain ANA-3).